The sequence spans 1854 residues: Calcium-channel protein cch1 (1854 aa).

Low complexity predominate over residues 1 to 15 (MSSSSNSDPSSSPDN). The disordered stretch occupies residues 1 to 33 (MSSSSNSDPSSSPDNTDFIPLKDNPKDTSSYIN). Asn-40 carries an N-linked (GlcNAc...) asparagine glycan. Transmembrane regions (helical) follow at residues 184–204 (HPLY…LLMI), 220–240 (IIVI…LFGF), and 274–294 (DFVA…QGIF). N-linked (GlcNAc...) asparagine glycosylation occurs at Asn-310. A run of 8 helical transmembrane segments spans residues 328–348 (PLVQ…ILGV), 427–447 (FFNS…TDIM), 461–481 (LFII…IAVV), 514–534 (YLFY…VTLC), 549–569 (LIFY…RFFA), 581–601 (YTNL…LPSI), 606–626 (VAFG…ILLI), and 642–662 (QLLN…LCAV). Asn-699 carries N-linked (GlcNAc...) asparagine glycosylation. Residues 723 to 743 (FFTLWFLFSNNVVLSMFIAVI) traverse the membrane as a helical segment. Asn-786 is a glycosylation site (N-linked (GlcNAc...) asparagine). 3 helical membrane-spanning segments follow: residues 946 to 966 (VFIY…TPIY), 980 to 1000 (FVWT…IKII), and 1021 to 1041 (FFVL…HALL). Asn-1058 carries an N-linked (GlcNAc...) asparagine glycan. Helical transmembrane passes span 1075 to 1095 (FFKI…FALW) and 1148 to 1168 (FPHA…VDIM). An N-linked (GlcNAc...) asparagine glycan is attached at Asn-1184. The next 4 membrane-spanning stretches (helical) occupy residues 1193-1213 (FVLF…AIII), 1274-1294 (FTGL…PCPI), 1302-1322 (SIFL…VYGL), and 1331-1351 (FWNM…IAIL). A glycan (N-linked (GlcNAc...) asparagine) is linked at Asn-1356. 3 helical membrane passes run 1358-1378 (SLTL…IPKF), 1393-1413 (PSIF…AIAF), and 1486-1506 (FIAW…TVVF). N-linked (GlcNAc...) asparagine glycosylation is found at Asn-1508 and Asn-1773. The disordered stretch occupies residues 1764–1792 (TIASGEGDDNHSVEDHLKVPTDNEPRRSP). The segment covering 1771 to 1790 (DDNHSVEDHLKVPTDNEPRR) has biased composition (basic and acidic residues).

Belongs to the calcium channel alpha-1 subunit (TC 1.A.1.11) family. As to quaternary structure, interacts with yam8 to form a Ca(2+) influx channel.

The protein localises to the cell membrane. Voltage-gated, high-affinity calcium channel that functions together with yam8 to mediate calcium entry into cells. Required during conditions of environmental stress. This chain is Calcium-channel protein cch1 (cch1), found in Schizosaccharomyces pombe (strain 972 / ATCC 24843) (Fission yeast).